The sequence spans 463 residues: EPD1-interacting receptor-like cytoplasmic serine/threonine-protein kinase (463 aa).

The Protein kinase domain maps to 91–383 (FSSANFLGKG…LTDIPIGPFV (293 aa)). Residues 97 to 105 (LGKGGFGPV) and Lys126 each bind ATP. 2 positions are modified to phosphotyrosine: Tyr171 and Tyr173. Catalysis depends on Asp221, which acts as the Proton acceptor.

This sequence belongs to the protein kinase superfamily. Ser/Thr protein kinase family. Interacts with the V.dahliae elicitor EPD1 (AC G2WWH6). Post-translationally, phosphorylated at Tyr-171 and Tyr-173 in the presence of pathogen-associated molecular patterns (PAMPs); this triggers the expression of pathogenesis-related genes.

It localises to the cell membrane. It carries out the reaction L-seryl-[protein] + ATP = O-phospho-L-seryl-[protein] + ADP + H(+). It catalyses the reaction L-threonyl-[protein] + ATP = O-phospho-L-threonyl-[protein] + ADP + H(+). Required for pathogen-associated molecular pattern (PAMP, e.g. chitin and flg22)-triggered immunity (PTI) involving reactive oxygen species (ROS) accumulation and triggering plant defense, including defense-related gene expression (e.g. PR1 and LOX). Ensures specific recognition of the EPD1 effector of Verticillium dahliae, resulting in a hypersensitive response known as effector-triggered immunity (ETI), characterized by the activation of programmed cell death to limit infection by the pathogen. Priming plants with the incompatible pathogen V.dahliae leads to an increased resistance to both the broad-host-range filamentous pathogen Botrytis cinerea and the semibiotrophic pathogen Phytophthora capsici, as a result of systemic acquired resistance (SAR). The chain is EPD1-interacting receptor-like cytoplasmic serine/threonine-protein kinase from Nicotiana benthamiana.